Reading from the N-terminus, the 400-residue chain is Acetate kinase (400 aa).

A Mg(2+)-binding site is contributed by Asn-10. Position 17 (Lys-17) interacts with ATP. Arg-91 is a binding site for substrate. Asp-150 acts as the Proton donor/acceptor in catalysis. Residues 210–214 (HLGNG), 285–287 (DCR), and 333–337 (GIGEN) each bind ATP. Residue Glu-387 participates in Mg(2+) binding.

It belongs to the acetokinase family. As to quaternary structure, homodimer. Requires Mg(2+) as cofactor. Mn(2+) is required as a cofactor.

Its subcellular location is the cytoplasm. The catalysed reaction is acetate + ATP = acetyl phosphate + ADP. Its pathway is metabolic intermediate biosynthesis; acetyl-CoA biosynthesis; acetyl-CoA from acetate: step 1/2. Catalyzes the formation of acetyl phosphate from acetate and ATP. Can also catalyze the reverse reaction. This Yersinia pestis bv. Antiqua (strain Antiqua) protein is Acetate kinase.